The following is a 151-amino-acid chain: Transcriptional repressor NrdR (151 aa).

Positions M1 to D21 are disordered. A zinc finger lies at C3–C34. Residues T11–D21 show a composition bias toward basic and acidic residues. The 91-residue stretch at L49–D139 folds into the ATP-cone domain.

It belongs to the NrdR family. The cofactor is Zn(2+).

Functionally, negatively regulates transcription of bacterial ribonucleotide reductase nrd genes and operons by binding to NrdR-boxes. The sequence is that of Transcriptional repressor NrdR from Acidiphilium cryptum (strain JF-5).